Here is a 429-residue protein sequence, read N- to C-terminus: MARSKSQKIEGCSFCGRTRAEAEGKIISAKSVAICFECSKICHNLFKEESDKPASNKAPRGLPTPKQLKSHLDKYIIGQEDAKKVLSVAVYNHYKRIFKGSKRETGVELEKSNVLLVGPTGSGKTLLAKKLAAEMNVPFAIADATTLTEAGYVGEDVENILLKLIHAANGDVSFAERGIIYIDEIDKIAKKGENVSITRDVSGEGVQQSLLKIIEGTIANVPPRGGRKHPYEETIAINTHDILFICGGAFVGLENIIKKRINRSFIGFSSSSCKDTGGDNSLKYLEMEDLIKFGLIPEFVGRLPVHSYLDKLEKKDLMKILVEPENSIVRQYYHMFKMDNVDLLFEKDALDAIAEEAMLKNTGARGLRSILEELLKDVMFEIPSSKQIKKVIVTKDSVLNTNVEPLILTGRHVNKPWAKELYEINSKSN.

The region spanning 1–54 (MARSKSQKIEGCSFCGRTRAEAEGKIISAKSVAICFECSKICHNLFKEESDKPA) is the ClpX-type ZB domain. 4 residues coordinate Zn(2+): Cys-12, Cys-15, Cys-35, and Cys-38. Position 119–126 (119–126 (PTGSGKTL)) interacts with ATP.

It belongs to the ClpX chaperone family. As to quaternary structure, component of the ClpX-ClpP complex. Forms a hexameric ring that, in the presence of ATP, binds to fourteen ClpP subunits assembled into a disk-like structure with a central cavity, resembling the structure of eukaryotic proteasomes.

Functionally, ATP-dependent specificity component of the Clp protease. It directs the protease to specific substrates. Can perform chaperone functions in the absence of ClpP. The sequence is that of ATP-dependent Clp protease ATP-binding subunit ClpX from Borrelia duttonii (strain Ly).